A 556-amino-acid polypeptide reads, in one-letter code: 2-succinyl-5-enolpyruvyl-6-hydroxy-3-cyclohexene-1-carboxylate synthase (556 aa).

The protein belongs to the TPP enzyme family. MenD subfamily. As to quaternary structure, homodimer. It depends on Mg(2+) as a cofactor. The cofactor is Mn(2+). Requires thiamine diphosphate as cofactor.

It carries out the reaction isochorismate + 2-oxoglutarate + H(+) = 5-enolpyruvoyl-6-hydroxy-2-succinyl-cyclohex-3-ene-1-carboxylate + CO2. It functions in the pathway quinol/quinone metabolism; 1,4-dihydroxy-2-naphthoate biosynthesis; 1,4-dihydroxy-2-naphthoate from chorismate: step 2/7. Its pathway is quinol/quinone metabolism; menaquinone biosynthesis. Catalyzes the thiamine diphosphate-dependent decarboxylation of 2-oxoglutarate and the subsequent addition of the resulting succinic semialdehyde-thiamine pyrophosphate anion to isochorismate to yield 2-succinyl-5-enolpyruvyl-6-hydroxy-3-cyclohexene-1-carboxylate (SEPHCHC). The sequence is that of 2-succinyl-5-enolpyruvyl-6-hydroxy-3-cyclohexene-1-carboxylate synthase from Escherichia coli (strain ATCC 8739 / DSM 1576 / NBRC 3972 / NCIMB 8545 / WDCM 00012 / Crooks).